Here is a 114-residue protein sequence, read N- to C-terminus: Transmembrane protein 14C (114 aa).

A run of 4 helical transmembrane segments spans residues 8–28 (LVPL…GGII), 33–53 (AGSV…GLGS), 62–82 (NIWL…MRFY), and 87–107 (FMPA…LGIS).

It is found in the mitochondrion membrane. In terms of biological role, required for normal heme biosynthesis. The chain is Transmembrane protein 14C (TMEM14C) from Bos taurus (Bovine).